The chain runs to 200 residues: Phospholipase A2 inhibitor NAI (200 aa).

A signal peptide spans 1-19 (MKSLLFCCLFGTFLATGMC). 8 cysteine pairs are disulfide-bonded: C22–C46, C25–C32, C39–C67, C73–C94, C95–C100, C120–C145, C138–C165, and C171–C191.

This sequence belongs to the CNF-like-inhibitor family. Heterotrimer of 2 subunits A and 1 subunit B; non-covalently linked. In terms of tissue distribution, expressed by the liver.

The protein resides in the secreted. Inhibits the enzymatic activity of all phospholipase A2 tested, binding with micromole to nanomole affinity. The protein is Phospholipase A2 inhibitor NAI of Notechis ater (Black tiger snake).